A 230-amino-acid polypeptide reads, in one-letter code: Ribose-5-phosphate isomerase A (230 aa).

Substrate is bound by residues 32–35 (TGST), 85–88 (DGAD), and 98–101 (KGGG). Glu107 acts as the Proton acceptor in catalysis. Lys125 serves as a coordination point for substrate.

This sequence belongs to the ribose 5-phosphate isomerase family. As to quaternary structure, homodimer.

The enzyme catalyses aldehydo-D-ribose 5-phosphate = D-ribulose 5-phosphate. The protein operates within carbohydrate degradation; pentose phosphate pathway; D-ribose 5-phosphate from D-ribulose 5-phosphate (non-oxidative stage): step 1/1. Functionally, catalyzes the reversible conversion of ribose-5-phosphate to ribulose 5-phosphate. The chain is Ribose-5-phosphate isomerase A from Burkholderia vietnamiensis (strain G4 / LMG 22486) (Burkholderia cepacia (strain R1808)).